Consider the following 46-residue polypeptide: Esculentin-1 (46 aa).

A disulfide bridge connects residues cysteine 40 and cysteine 46.

In terms of tissue distribution, expressed by the skin glands.

Its subcellular location is the secreted. In terms of biological role, antimicrobial peptide. Stimulates insulin release by BRIN-BD11 cells in vitro. The polypeptide is Esculentin-1 (Pelophylax saharicus (Sahara frog)).